Reading from the N-terminus, the 376-residue chain is N-acetyldiaminopimelate deacetylase (376 aa).

The active site involves Asp-69. Residue Glu-127 is the Proton acceptor of the active site.

It belongs to the peptidase M20A family. N-acetyldiaminopimelate deacetylase subfamily.

The catalysed reaction is N-acetyl-(2S,6S)-2,6-diaminopimelate + H2O = (2S,6S)-2,6-diaminopimelate + acetate. It participates in amino-acid biosynthesis; L-lysine biosynthesis via DAP pathway; LL-2,6-diaminopimelate from (S)-tetrahydrodipicolinate (acetylase route): step 3/3. Catalyzes the conversion of N-acetyl-diaminopimelate to diaminopimelate and acetate. In Lactococcus lactis subsp. cremoris (strain SK11), this protein is N-acetyldiaminopimelate deacetylase.